The chain runs to 305 residues: tRNA pseudouridine synthase B (305 aa).

Residue Asp38 is the Nucleophile of the active site.

The protein belongs to the pseudouridine synthase TruB family. Type 1 subfamily.

It catalyses the reaction uridine(55) in tRNA = pseudouridine(55) in tRNA. Responsible for synthesis of pseudouridine from uracil-55 in the psi GC loop of transfer RNAs. The polypeptide is tRNA pseudouridine synthase B (Latilactobacillus sakei subsp. sakei (strain 23K) (Lactobacillus sakei subsp. sakei)).